Consider the following 413-residue polypeptide: Argininosuccinate synthase (413 aa).

Residues 12 to 20 and alanine 39 each bind ATP; that span reads AYSGGLDTS. 2 residues coordinate L-citrulline: tyrosine 92 and serine 97. Residue glycine 122 coordinates ATP. L-aspartate contacts are provided by threonine 124, asparagine 128, and aspartate 129. Asparagine 128 serves as a coordination point for L-citrulline. The L-citrulline site is built by arginine 132, serine 189, serine 198, glutamate 274, and tyrosine 286.

It belongs to the argininosuccinate synthase family. Type 1 subfamily. As to quaternary structure, homotetramer.

The protein localises to the cytoplasm. The enzyme catalyses L-citrulline + L-aspartate + ATP = 2-(N(omega)-L-arginino)succinate + AMP + diphosphate + H(+). The protein operates within amino-acid biosynthesis; L-arginine biosynthesis; L-arginine from L-ornithine and carbamoyl phosphate: step 2/3. The protein is Argininosuccinate synthase of Aliarcobacter butzleri (strain RM4018) (Arcobacter butzleri).